Consider the following 267-residue polypeptide: uncharacterized protein (267 aa).

Positions 37–62 form a coiled coil; that stretch reads DSSNNYKKKYKKYKRKYIDLKKQLNY.

This is an uncharacterized protein from Acanthamoeba polyphaga (Amoeba).